The chain runs to 306 residues: Ribosomal protein L11 methyltransferase (306 aa).

The S-adenosyl-L-methionine site is built by Thr-154, Gly-179, Asp-201, and Asn-242.

This sequence belongs to the methyltransferase superfamily. PrmA family.

It localises to the cytoplasm. The catalysed reaction is L-lysyl-[protein] + 3 S-adenosyl-L-methionine = N(6),N(6),N(6)-trimethyl-L-lysyl-[protein] + 3 S-adenosyl-L-homocysteine + 3 H(+). Its function is as follows. Methylates ribosomal protein L11. This chain is Ribosomal protein L11 methyltransferase, found in Xylella fastidiosa (strain 9a5c).